The chain runs to 153 residues: Ribosomal RNA large subunit methyltransferase H (153 aa).

S-adenosyl-L-methionine-binding positions include isoleucine 75, glycine 103, and leucine 121–phenylalanine 126.

Belongs to the RNA methyltransferase RlmH family. As to quaternary structure, homodimer.

It is found in the cytoplasm. It carries out the reaction pseudouridine(1915) in 23S rRNA + S-adenosyl-L-methionine = N(3)-methylpseudouridine(1915) in 23S rRNA + S-adenosyl-L-homocysteine + H(+). In terms of biological role, specifically methylates the pseudouridine at position 1915 (m3Psi1915) in 23S rRNA. The chain is Ribosomal RNA large subunit methyltransferase H from Helicobacter hepaticus (strain ATCC 51449 / 3B1).